Here is a 2792-residue protein sequence, read N- to C-terminus: E3 ubiquitin-protein ligase UBR5 (2792 aa).

Position 2 is an N-acetylthreonine (threonine 2). Over residues aspartate 77 to aspartate 88 the composition is skewed to basic and acidic residues. The disordered stretch occupies residues aspartate 77 to glutamine 175. The segment covering serine 94–proline 111 has biased composition (low complexity). A Phosphoserine modification is found at serine 110. A compositionally biased stretch (gly residues) spans glycine 135–serine 144. One can recognise a UBA domain in the interval valine 184–arginine 226. Serine 321 carries the phosphoserine modification. Over residues phenylalanine 322–asparagine 341 the composition is skewed to basic and acidic residues. The segment at phenylalanine 322 to proline 347 is disordered. Serine 346 and serine 572 each carry phosphoserine. Basic and acidic residues predominate over residues lysine 577–lysine 598. Residues lysine 577–glutamate 642 form a disordered region. Position 606 is a phosphoserine (serine 606). Residues alanine 608 to serine 622 are compositionally biased toward low complexity. Threonine 631 is subject to Phosphothreonine. 3 positions are modified to phosphoserine: serine 802, serine 922, and serine 1012. Disordered stretches follow at residues alanine 993 to proline 1029 and threonine 1046 to valine 1069. A compositionally biased stretch (pro residues) spans valine 1011 to methionine 1027. Residues threonine 1046–proline 1067 show a composition bias toward polar residues. Threonine 1109 and threonine 1129 each carry phosphothreonine. A UBR-type zinc finger spans residues aspartate 1171 to alanine 1239. Phosphoserine is present on residues serine 1221, serine 1302, serine 1349, serine 1369, and serine 1475. The interval arginine 1293 to aspartate 1312 is disordered. Positions serine 1509 to serine 1734 are disordered. The span at serine 1518–serine 1531 shows a compositional bias: low complexity. A compositionally biased stretch (polar residues) spans tyrosine 1532 to proline 1547. The residue at position 1543 (serine 1543) is a Phosphoserine. 2 stretches are compositionally biased toward acidic residues: residues glutamate 1553 to valine 1568 and histidine 1599 to leucine 1608. Over residues asparagine 1623–glycine 1632 the composition is skewed to polar residues. 3 stretches are compositionally biased toward low complexity: residues serine 1635 to valine 1651, serine 1662 to serine 1675, and alanine 1720 to serine 1734. Threonine 1730 is modified (phosphothreonine). The residue at position 1735 (serine 1735) is a Phosphoserine. At tyrosine 1740 the chain carries Phosphotyrosine. Serine 1774 carries the post-translational modification Phosphoserine. Positions leucine 1853–alanine 1884 are disordered. Positions alanine 1873 to alanine 1884 are enriched in basic and acidic residues. Residue threonine 1963 is modified to Phosphothreonine. The tract at residues glycine 1978 to proline 2015 is disordered. The span at isoleucine 1979–threonine 1992 shows a compositional bias: acidic residues. 3 positions are modified to phosphoserine: serine 1984, serine 2020, and serine 2022. Threonine 2024 is subject to Phosphothreonine. Serine 2070 is subject to Phosphoserine. Residues arginine 2111–aspartate 2137 form a disordered region. Threonine 2207 bears the Phosphothreonine mark. Residues serine 2235 and serine 2283 each carry the phosphoserine modification. Positions histidine 2317–histidine 2387 are disordered. Basic and acidic residues-rich tracts occupy residues asparagine 2326 to arginine 2342 and serine 2350 to leucine 2362. The 78-residue stretch at proline 2371–arginine 2448 folds into the PABC domain. Residues isoleucine 2455–valine 2792 form the HECT domain. Phosphoserine occurs at positions 2463, 2477, and 2479. Residues valine 2467–asparagine 2494 are disordered. Over residues methionine 2483–aspartate 2493 the composition is skewed to acidic residues. The Glycyl thioester intermediate role is filled by cysteine 2761.

It belongs to the UBR5 family. In terms of assembly, homotetramer; composed of a dimer of dimers. Associates with CDK9 and TFIIS/TCEA1 and forms a transcription regulatory complex made of CDK9, RNAP II, UBR5 and TFIIS/TCEA1 that can stimulate target gene transcription (e.g. gamma fibrinogen/FGG) by recruiting their promoters. Associates with the E3 ligase complex containing DYRK2, EDD/UBR5, DDB1 and DCAF1 proteins (EDVP complex). Binds TOPBP1. Interacts with PIH1D1. Interacts with CIB1.

The protein resides in the nucleus. It is found in the cytoplasm. It carries out the reaction S-ubiquitinyl-[E2 ubiquitin-conjugating enzyme]-L-cysteine + [acceptor protein]-L-lysine = [E2 ubiquitin-conjugating enzyme]-L-cysteine + N(6)-ubiquitinyl-[acceptor protein]-L-lysine.. Its pathway is protein modification; protein ubiquitination. E3 ubiquitin-protein ligase involved in different protein quality control pathways in the cytoplasm and nucleus. Mainly acts as a ubiquitin chain elongator that extends pre-ubiquitinated substrates. Component of the N-end rule pathway: ubiquitinates proteins bearing specific N-terminal residues that are destabilizing according to the N-end rule, leading to their degradation. Recognizes type-1 N-degrons, containing positively charged amino acids (Arg, Lys and His). Together with UBR4, part of a cytoplasm protein quality control pathway that prevents protein aggregation by catalyzing assembly of heterotypic 'Lys-11'-/'Lys-48'-linked branched ubiquitin chains on aggregated proteins, leading to substrate recognition by the segregase p97/VCP and degradation by the proteasome: UBR5 is probably branching multiple 'Lys-48'-linked chains of substrates initially modified with mixed conjugates by UBR4. Together with ITCH, catalyzes 'Lys-48'-/'Lys-63'-branched ubiquitination of TXNIP, leading to its degradation: UBR5 mediates branching of 'Lys-48'-linked chains of substrates initially modified with 'Lys-63'-linked conjugates by ITCH. Catalytic component of a nuclear protein quality control pathway that mediates ubiquitination and degradation of unpaired transcription factors (i.e. transcription factors that are not assembled into functional multiprotein complexes): specifically recognizes and binds degrons that are not accessible when transcription regulators are associated with their coactivators. Ubiquitinates various unpaired transcription regulator (MYC, SUPT4H1, SUPT5H, CDC20 and MCRS1), as well as ligand-bound nuclear receptors (ESR1, NR1H3, NR3C1, PGR, RARA, RXRA AND VDR) that are not associated with their nuclear receptor coactivators (NCOAs). Involved in maturation and/or transcriptional regulation of mRNA by mediating polyubiquitination and activation of CDK9. Also acts as a regulator of DNA damage response by acting as a suppressor of RNF168, an E3 ubiquitin-protein ligase that promotes accumulation of 'Lys-63'-linked histone H2A and H2AX at DNA damage sites, thereby acting as a guard against excessive spreading of ubiquitinated chromatin at damaged chromosomes. Regulates DNA topoisomerase II binding protein (TopBP1) in the DNA damage response. Ubiquitinates acetylated PCK1. Acts as a positive regulator of the canonical Wnt signaling pathway by mediating (1) ubiquitination and stabilization of CTNNB1, and (2) 'Lys-48'-linked ubiquitination and degradation of TLE3. Promotes disassembly of the mitotic checkpoint complex (MCC) from the APC/C complex by catalyzing ubiquitination of BUB1B, BUB3 and CDC20. Plays an essential role in extraembryonic development. Required for the maintenance of skeletal tissue homeostasis by acting as an inhibitor of hedgehog (HH) signaling. This is E3 ubiquitin-protein ligase UBR5 from Mus musculus (Mouse).